Consider the following 374-residue polypeptide: Putative cullin-like protein 2 (374 aa).

This sequence belongs to the cullin family.

In Arabidopsis thaliana (Mouse-ear cress), this protein is Putative cullin-like protein 2.